A 76-amino-acid polypeptide reads, in one-letter code: Defensin-like protein 155 (76 aa).

The N-terminal stretch at 1 to 27 is a signal peptide; that stretch reads MAKISCSYLLILMLALSVFSVVEKAKG. 4 disulfide bridges follow: cysteine 31-cysteine 76, cysteine 40-cysteine 59, cysteine 45-cysteine 70, and cysteine 49-cysteine 72.

This sequence belongs to the DEFL family.

It is found in the secreted. The sequence is that of Defensin-like protein 155 (LCR36) from Arabidopsis thaliana (Mouse-ear cress).